A 154-amino-acid polypeptide reads, in one-letter code: Transcriptional repressor NrdR (154 aa).

A zinc finger lies at 3 to 34 (CPFCGANDTKVIDSRLVAEGEQVRRRRECLAC). An ATP-cone domain is found at 49–139 (PRLIKTDGSR…VYRRFQDLNE (91 aa)).

It belongs to the NrdR family. It depends on Zn(2+) as a cofactor.

Its function is as follows. Negatively regulates transcription of bacterial ribonucleotide reductase nrd genes and operons by binding to NrdR-boxes. The protein is Transcriptional repressor NrdR of Pseudomonas fluorescens (strain ATCC BAA-477 / NRRL B-23932 / Pf-5).